A 286-amino-acid chain; its full sequence is MDQPMKPKTCSESDFADDSSASSSSSSGQNLRGAEMVVEVKKEAVCSQKAEREKLRRDKLKEQFLELGNALDPNRPKSDKASVLTDTIQMLKDVMNQVDRLKAEYETLSQESRELIQEKSELREEKATLKSDIEILNAQYQHRIKTMVPWVPHYSYHIPFVAITQGQSSFIPYSASVNPLTEQQASVQQHSSSSADASMKQDSKIKPLDLDLMMNSNHSGQGNDQKDDVRLKLELKIHASSLAQQDVSGKEKKVSLTTTASSSNSYSLSQAVQDSSPGTVNDMLKP.

Positions 1-34 (MDQPMKPKTCSESDFADDSSASSSSSSGQNLRGA) are disordered. Low complexity predominate over residues 18-27 (DSSASSSSSS). The region spanning 44-94 (AVCSQKAEREKLRRDKLKEQFLELGNALDPNRPKSDKASVLTDTIQMLKDV) is the bHLH domain. Disordered regions lie at residues 182 to 202 (EQQASVQQHSSSSADASMKQD) and 244 to 286 (QQDV…MLKP). Composition is skewed to low complexity over residues 183–198 (QQASVQQHSSSSADAS) and 255–269 (SLTTTASSSNSYSLS). Residues 270–279 (QAVQDSSPGT) are compositionally biased toward polar residues.

As to quaternary structure, homodimer. In terms of tissue distribution, expressed consitutively in roots, leaves, stems, and flowers.

The protein localises to the nucleus. The chain is Transcription factor bHLH11 (BHLH11) from Arabidopsis thaliana (Mouse-ear cress).